The chain runs to 142 residues: Regulator of ribonuclease activity B (142 aa).

The segment at 117-142 (PNADEDEYGEDGEFFDDEFADDDEKR) is disordered.

The protein belongs to the RraB family. Interacts with the C-terminal region of Rne.

The protein resides in the cytoplasm. Functionally, globally modulates RNA abundance by binding to RNase E (Rne) and regulating its endonucleolytic activity. Can modulate Rne action in a substrate-dependent manner by altering the composition of the degradosome. The chain is Regulator of ribonuclease activity B from Actinobacillus succinogenes (strain ATCC 55618 / DSM 22257 / CCUG 43843 / 130Z).